The sequence spans 107 residues: Small ribosomal subunit protein uS10m (107 aa).

This sequence belongs to the universal ribosomal protein uS10 family.

The protein localises to the mitochondrion. The sequence is that of Small ribosomal subunit protein uS10m (RPS10) from Prototheca wickerhamii.